Here is a 225-residue protein sequence, read N- to C-terminus: Prolactin (225 aa).

The first 28 residues, 1–28 (MTIQGSDRKGTLLLLVMSNLLFCQNVHP), serve as a signal peptide directing secretion. An intrachain disulfide couples Cys32 to Cys37. 2 positions are modified to phosphoserine: Ser52 and Ser116. Intrachain disulfides connect Cys84–Cys200 and Cys217–Cys225.

This sequence belongs to the somatotropin/prolactin family. Interacts with PRLR.

The protein localises to the secreted. Its function is as follows. Prolactin acts primarily on the mammary gland by promoting lactation. The protein is Prolactin (PRL) of Alexandromys montebelli (Japanese grass vole).